A 344-amino-acid chain; its full sequence is uncharacterized protein (344 aa).

Residues 1-20 form the signal peptide; the sequence is MEIRIMLFILMMMVMPVSYA.

The protein belongs to the fimbrial protein family.

Functionally, part of the yehABCD fimbrial operon. Could contribute to adhesion to various surfaces in specific environmental niches. This is an uncharacterized protein from Escherichia coli (strain K12).